A 328-amino-acid chain; its full sequence is DNA-directed RNA polymerase subunit alpha (328 aa).

The tract at residues 1–234 is alpha N-terminal domain (alpha-NTD); the sequence is MQTAVNEFLT…QQLAVFVDLE (234 aa). An alpha C-terminal domain (alpha-CTD) region spans residues 248–328; that stretch reads IDPILLRPVD…NWPPASLKND (81 aa).

This sequence belongs to the RNA polymerase alpha chain family. Homodimer. The RNAP catalytic core consists of 2 alpha, 1 beta, 1 beta' and 1 omega subunit. When a sigma factor is associated with the core the holoenzyme is formed, which can initiate transcription.

The catalysed reaction is RNA(n) + a ribonucleoside 5'-triphosphate = RNA(n+1) + diphosphate. Functionally, DNA-dependent RNA polymerase catalyzes the transcription of DNA into RNA using the four ribonucleoside triphosphates as substrates. The polypeptide is DNA-directed RNA polymerase subunit alpha (Cellvibrio japonicus (strain Ueda107) (Pseudomonas fluorescens subsp. cellulosa)).